The sequence spans 419 residues: Serine hydroxymethyltransferase (419 aa).

(6S)-5,6,7,8-tetrahydrofolate-binding positions include L121 and 125–127 (GHL). The residue at position 230 (K230) is an N6-(pyridoxal phosphate)lysine. 355 to 357 (SPF) is a binding site for (6S)-5,6,7,8-tetrahydrofolate.

This sequence belongs to the SHMT family. Homodimer. Pyridoxal 5'-phosphate serves as cofactor.

The protein localises to the cytoplasm. It carries out the reaction (6R)-5,10-methylene-5,6,7,8-tetrahydrofolate + glycine + H2O = (6S)-5,6,7,8-tetrahydrofolate + L-serine. The protein operates within one-carbon metabolism; tetrahydrofolate interconversion. It functions in the pathway amino-acid biosynthesis; glycine biosynthesis; glycine from L-serine: step 1/1. Functionally, catalyzes the reversible interconversion of serine and glycine with tetrahydrofolate (THF) serving as the one-carbon carrier. This reaction serves as the major source of one-carbon groups required for the biosynthesis of purines, thymidylate, methionine, and other important biomolecules. Also exhibits THF-independent aldolase activity toward beta-hydroxyamino acids, producing glycine and aldehydes, via a retro-aldol mechanism. This chain is Serine hydroxymethyltransferase, found in Streptococcus equi subsp. zooepidemicus (strain H70).